Here is a 115-residue protein sequence, read N- to C-terminus: NADH-ubiquinone oxidoreductase chain 3 (115 aa).

The next 3 helical transmembrane spans lie at 4-24 (LLAM…AFWL), 55-75 (FFLV…LLPI), and 87-107 (MMLT…YEWI).

This sequence belongs to the complex I subunit 3 family. As to quaternary structure, core subunit of respiratory chain NADH dehydrogenase (Complex I) which is composed of 45 different subunits. Interacts with TMEM186. Interacts with TMEM242.

The protein localises to the mitochondrion inner membrane. The enzyme catalyses a ubiquinone + NADH + 5 H(+)(in) = a ubiquinol + NAD(+) + 4 H(+)(out). Functionally, core subunit of the mitochondrial membrane respiratory chain NADH dehydrogenase (Complex I) which catalyzes electron transfer from NADH through the respiratory chain, using ubiquinone as an electron acceptor. Essential for the catalytic activity of complex I. This is NADH-ubiquinone oxidoreductase chain 3 from Neotoma floridana (Eastern woodrat).